The following is a 281-amino-acid chain: NADPH-dependent 7-cyano-7-deazaguanine reductase (281 aa).

Valine 87 to serine 89 contacts substrate. Serine 89 to lysine 90 contacts NADPH. The active-site Thioimide intermediate is the cysteine 188. The Proton donor role is filled by aspartate 195. Residue histidine 227–glutamate 228 coordinates substrate. Arginine 256–glycine 257 is an NADPH binding site.

The protein belongs to the GTP cyclohydrolase I family. QueF type 2 subfamily. Homodimer.

Its subcellular location is the cytoplasm. The catalysed reaction is 7-aminomethyl-7-carbaguanine + 2 NADP(+) = 7-cyano-7-deazaguanine + 2 NADPH + 3 H(+). Its pathway is tRNA modification; tRNA-queuosine biosynthesis. Its function is as follows. Catalyzes the NADPH-dependent reduction of 7-cyano-7-deazaguanine (preQ0) to 7-aminomethyl-7-deazaguanine (preQ1). In Aliivibrio salmonicida (strain LFI1238) (Vibrio salmonicida (strain LFI1238)), this protein is NADPH-dependent 7-cyano-7-deazaguanine reductase.